A 273-amino-acid chain; its full sequence is MANCFVGDIQGCYDDLRRLLDLAKFDPAKDVLWLCGDLVARGPDSLKTLRYVKSLGQRAVTVLGNHDLHLLAVADGVAPLKKKDKLQALMEAPDRDELLTWLRHRPLLAEHPDLPIMMVHAGISPAWDARTARNCAREVESLLRGDQYSWLLHNMYGDLPDGWSEDLAGIERYRYIINTFTRMRFCYFDGRLEFKCKKGPTESTPGLRPWFEQREHHMDDPILVFGHWAALMGNTGRNDIKALDTGCVWGNSLTLWRYEDDALIATPCPTHAK.

Belongs to the Ap4A hydrolase family.

It carries out the reaction P(1),P(4)-bis(5'-adenosyl) tetraphosphate + H2O = 2 ADP + 2 H(+). In terms of biological role, hydrolyzes diadenosine 5',5'''-P1,P4-tetraphosphate to yield ADP. The polypeptide is Bis(5'-nucleosyl)-tetraphosphatase, symmetrical (Aeromonas salmonicida (strain A449)).